Here is a 213-residue protein sequence, read N- to C-terminus: Na(+)-translocating NADH-quinone reductase subunit D (213 aa).

7 helical membrane passes run 21 to 41 (ILIA…VQTA), 42 to 62 (ITMG…VSLL), 77 to 97 (IIIS…FFDI), 101 to 121 (LSVF…SESL), 131 to 151 (FLDG…IGVI), 153 to 173 (ELFG…VYAS), and 183 to 203 (LSLM…IWLV).

It belongs to the NqrDE/RnfAE family. In terms of assembly, composed of six subunits; NqrA, NqrB, NqrC, NqrD, NqrE and NqrF.

The protein localises to the cell inner membrane. The catalysed reaction is a ubiquinone + n Na(+)(in) + NADH + H(+) = a ubiquinol + n Na(+)(out) + NAD(+). Functionally, NQR complex catalyzes the reduction of ubiquinone-1 to ubiquinol by two successive reactions, coupled with the transport of Na(+) ions from the cytoplasm to the periplasm. NqrA to NqrE are probably involved in the second step, the conversion of ubisemiquinone to ubiquinol. The polypeptide is Na(+)-translocating NADH-quinone reductase subunit D (Chlamydia pneumoniae (Chlamydophila pneumoniae)).